Here is a 492-residue protein sequence, read N- to C-terminus: 3-octaprenyl-4-hydroxybenzoate carboxy-lyase (492 aa).

N177 contributes to the Mn(2+) binding site. Residues 180 to 182, 194 to 196, and 199 to 200 contribute to the prenylated FMN site; these read IYR, RWL, and RG. E243 provides a ligand contact to Mn(2+). Catalysis depends on D292, which acts as the Proton donor.

The protein belongs to the UbiD family. In terms of assembly, homohexamer. It depends on prenylated FMN as a cofactor. Mn(2+) is required as a cofactor.

The protein resides in the cell membrane. The catalysed reaction is a 4-hydroxy-3-(all-trans-polyprenyl)benzoate + H(+) = a 2-(all-trans-polyprenyl)phenol + CO2. Its pathway is cofactor biosynthesis; ubiquinone biosynthesis. In terms of biological role, catalyzes the decarboxylation of 3-octaprenyl-4-hydroxy benzoate to 2-octaprenylphenol, an intermediate step in ubiquinone biosynthesis. This chain is 3-octaprenyl-4-hydroxybenzoate carboxy-lyase, found in Neisseria meningitidis serogroup B (strain ATCC BAA-335 / MC58).